We begin with the raw amino-acid sequence, 525 residues long: Matrix extracellular phosphoglycoprotein (525 aa).

A signal peptide spans 1 to 17; sequence MRVFCVGLLLFSVTWAA. 3 disordered regions span residues 24-95, 187-216, and 237-525; these read TEKT…NRQR, AKAH…THRI, and EGSG…SDGD. Basic and acidic residues-rich tracts occupy residues 25–46 and 64–73; these read EKTK…DNIG and IVQERKKDLS. Composition is skewed to polar residues over residues 75–95 and 200–210; these read SEAS…NRQR and DSQAQKSPVKS. A dentonin region spans residues 242-264; that stretch reads TDLQERGDNDISPFSGDGQPFKD. The Cell attachment site motif lies at 247-249; it reads RGD. O-linked (Xyl...) (chondroitin sulfate) serine glycosylation occurs at serine 256. 2 stretches are compositionally biased toward basic and acidic residues: residues 292 to 312 and 319 to 328; these read ESTH…REEN and TRDETAKEAD. Residues asparagine 477 and asparagine 478 are each glycosylated (N-linked (GlcNAc...) asparagine). Residues 507–525 form an ASARM motif; interaction with PHEX region; the sequence is RDDSSESSDSGSSSESDGD. Residues 513-525 are compositionally biased toward low complexity; the sequence is SSDSGSSSESDGD.

It belongs to the PF07175/osteoregulin family. As to quaternary structure, interacts (via the ASARM motif) with PHEX; the interaction is zinc-dependent. In terms of processing, phosphorylated on serine residues in the ASARM motif (in vitro) by FAM20C; the phosphorylation is important for the inhibition of bone mineralization. Post-translationally, cleaved by CTSB/cathepsin B; the cleavage is blocked by metalloprotease PHEX. As to expression, detected in urine (at protein level). Expressed by osteoblasts. Expressed by stem cells in dental pulp. Expressed by mesenchymal cells in dental papilla and dental pulp. Expressed in teeth, specifically in decidious dentin. Expressed in ondotoblasts. Expressed in salivary glands. Secreted from oncogenic hypophosphatemic tumors.

It localises to the secreted. It is found in the extracellular space. The protein resides in the extracellular matrix. Functionally, promotes renal phosphate excretion and inhibits intestinal phosphate absorption. Promotes bone mineralization by osteoblasts and cartilage mineralization by chondrocytes. Regulates the mineralization of the extracellular matrix of the craniofacial complex, such as teeth, bone and cartilage. Promotes dental pulp stem cell proliferation and differentiation. The polypeptide is Matrix extracellular phosphoglycoprotein (MEPE) (Homo sapiens (Human)).